A 487-amino-acid chain; its full sequence is V-type proton ATPase subunit B3 (487 aa).

The protein belongs to the ATPase alpha/beta chains family. As to quaternary structure, V-ATPase is a heteromultimeric enzyme composed of a peripheral catalytic V1 complex (components A to H) attached to an integral membrane V0 proton pore complex (components: a, c, c'', d and e).

The protein localises to the vacuole membrane. In terms of biological role, non-catalytic subunit of the peripheral V1 complex of vacuolar ATPase. V-ATPase is responsible for acidifying a variety of intracellular compartments in eukaryotic cells. This chain is V-type proton ATPase subunit B3 (VHA-B3), found in Arabidopsis thaliana (Mouse-ear cress).